Here is a 313-residue protein sequence, read N- to C-terminus: Tyrosine recombinase XerD (313 aa).

Positions 17–102 constitute a Core-binding (CB) domain; that stretch reads EDNDVIIEQF…TLRRFFQYLY (86 aa). The Tyr recombinase domain occupies 123 to 307; that stretch reads RLPKDLSEQQ…ATERLKVLHQ (185 aa). Catalysis depends on residues Arg-163, Lys-187, His-259, Arg-262, and His-285. Residue Tyr-294 is the O-(3'-phospho-DNA)-tyrosine intermediate of the active site.

It belongs to the 'phage' integrase family. XerD subfamily. Forms a cyclic heterotetrameric complex composed of two molecules of XerC and two molecules of XerD, in which XerC interacts with XerD via its C-terminal region, XerD interacts with XerC via its C-terminal region and so on.

It is found in the cytoplasm. With respect to regulation, ftsK may regulate the catalytic switch between XerC and XerD in the heterotetrameric complex during the two steps of the recombination process. In terms of biological role, site-specific tyrosine recombinase, which acts by catalyzing the cutting and rejoining of the recombining DNA molecules. Binds cooperatively to specific DNA consensus sequences that are separated from XerC binding sites by a short central region, forming the heterotetrameric XerC-XerD complex that recombines DNA substrates. The complex is essential to convert dimers of the bacterial chromosome into monomers to permit their segregation at cell division. It also contributes to the segregational stability of plasmids. In the complex XerD specifically exchanges the bottom DNA strands. In Proteus mirabilis, this protein is Tyrosine recombinase XerD.